A 489-amino-acid polypeptide reads, in one-letter code: Probable serine protease EDA2 (489 aa).

The first 25 residues, methionine 1–alanine 25, serve as a signal peptide directing secretion. Residues asparagine 35, asparagine 51, and asparagine 162 are each glycosylated (N-linked (GlcNAc...) asparagine). Serine 178 (charge relay system) is an active-site residue. Asparagine 253, asparagine 293, asparagine 365, and asparagine 406 each carry an N-linked (GlcNAc...) asparagine glycan. Aspartate 410 serves as the catalytic Charge relay system. N-linked (GlcNAc...) asparagine glycosylation is present at asparagine 419. The active-site Charge relay system is histidine 436. A glycan (N-linked (GlcNAc...) asparagine) is linked at asparagine 456.

This sequence belongs to the peptidase S28 family.

It localises to the secreted. Functionally, may be involved in a proteolytic pathway controlling the nuclear division phase of megagametogenesis. The chain is Probable serine protease EDA2 (EDA2) from Arabidopsis thaliana (Mouse-ear cress).